The chain runs to 93 residues: Cobalt transport protein CbiN (93 aa).

Helical transmembrane passes span 5–25 (LMLL…NHGG) and 63–83 (LLFT…LGYC).

The protein belongs to the CbiN family. Forms an energy-coupling factor (ECF) transporter complex composed of an ATP-binding protein (A component, CbiO), a transmembrane protein (T component, CbiQ) and 2 possible substrate-capture proteins (S components, CbiM and CbiN) of unknown stoichimetry.

It is found in the cell inner membrane. It functions in the pathway cofactor biosynthesis; adenosylcobalamin biosynthesis. In terms of biological role, part of the energy-coupling factor (ECF) transporter complex CbiMNOQ involved in cobalt import. The sequence is that of Cobalt transport protein CbiN from Salmonella paratyphi B (strain ATCC BAA-1250 / SPB7).